The chain runs to 413 residues: Divalent metal cation transporter MntH (413 aa).

A run of 11 helical transmembrane segments spans residues 19–39, 46–66, 94–114, 122–142, 156–176, 196–216, 241–261, 290–310, 329–349, 350–370, and 389–409; these read LALM…GNFA, ASFG…AMLI, VWFY…AEFI, LVLG…TFLI, VIGG…IFSQ, AVFL…IYLH, IAMT…AAAF, IFGL…TLAG, AITM…TRIL, VMSQ…LLIF, and IGWA…VGSL.

The protein belongs to the NRAMP family.

It localises to the cell inner membrane. In terms of biological role, h(+)-stimulated, divalent metal cation uptake system. This Klebsiella pneumoniae subsp. pneumoniae (strain ATCC 700721 / MGH 78578) protein is Divalent metal cation transporter MntH.